A 774-amino-acid polypeptide reads, in one-letter code: Ras and Rab interactor 1 (774 aa).

Methionine 1 is subject to N-acetylmethionine. Positions 1-52 (MEDPGETEAHPLGATSLNFVPGYQQEEKPSPDPLYDTPDARGVQAGGSQQPA) are disordered. Position 16 is a phosphoserine (serine 16). At tyrosine 35 the chain carries Phosphotyrosine; by ABL1 and ABL2. An SH2 domain is found at 68–162 (WLQLRANAAA…ILLLPLPLPR (95 aa)). Disordered stretches follow at residues 188-211 (LNTK…RSPQ) and 249-342 (STET…RPRH). Residues serine 209, serine 257, serine 330, and serine 334 each carry the phosphoserine modification. A compositionally biased stretch (pro residues) spans 256–268 (LSPPAVPPPPVPV). Residues 327-337 (SSGSPTTSPRL) are compositionally biased toward low complexity. A Phosphoserine; by PKD/PRKD1 modification is found at serine 351. The region spanning 456 to 598 (LSTDGSLGRL…LSGLSQAHAL (143 aa)) is the VPS9 domain. At serine 609 the chain carries Phosphoserine. Residues 624–706 (FQHLLRVAYQ…GYLIYRRAER (83 aa)) form the Ras-associating domain. Arginine 692 carries the post-translational modification Omega-N-methylarginine. Over residues 704–766 (AERPETQRAA…GHMQLEEQKA (63 aa)) the composition is skewed to basic and acidic residues. A disordered region spans residues 704–774 (AERPETQRAA…KAEGCPALEE (71 aa)).

Belongs to the RIN (Ras interaction/interference) family. As to quaternary structure, interacts with the GTP-bound form of Ras proteins (NRAS, HRAS and KRAS). This interaction prevents the association between RAF1 and Ras. Interacts with 14-3-3 proteins YWHAB, YWHAE and YWHAZ when phosphorylated on Ser-351. Interacts with the SH3 domain of ABL1 and ABL2. Interacts with RAB5A. The interaction with Ras is probably regulated and antagonized by the interaction with 14-3-3 proteins. The interaction with 14-3-3 proteins is regulated by phosphorylation on Ser-351. Phosphorylated on tyrosine residues by ABL1 and ABL2. Phosphorylation at Ser-351 by PRKD1 induces interaction with 14-3-3 proteins.

It localises to the cytoplasm. The protein localises to the membrane. The protein resides in the cytoskeleton. Ras effector protein, which may serve as an inhibitory modulator of neuronal plasticity in aversive memory formation. Can affect Ras signaling at different levels. First, by competing with RAF1 protein for binding to activated Ras. Second, by enhancing signaling from ABL1 and ABL2, which regulate cytoskeletal remodeling. Third, by activating RAB5A, possibly by functioning as a guanine nucleotide exchange factor (GEF) for RAB5A, by exchanging bound GDP for free GTP, and facilitating Ras-activated receptor endocytosis. The polypeptide is Ras and Rab interactor 1 (Rin1) (Rattus norvegicus (Rat)).